Here is a 620-residue protein sequence, read N- to C-terminus: Probable protein arginine N-methyltransferase 3 (620 aa).

Basic and acidic residues predominate over residues methionine 1–glutamate 17. The disordered stretch occupies residues methionine 1–glycine 45. Over residues aspartate 18–glycine 45 the composition is skewed to acidic residues. A C2H2-type 1 zinc finger spans residues leucine 55–histidine 78. The C2H2-type 2; degenerate zinc-finger motif lies at asparagine 110–leucine 137. The SAM-dependent MTase PRMT-type domain occupies aspartate 253–serine 582. S-adenosyl-L-homocysteine-binding residues include arginine 275, glycine 299, aspartate 321, serine 323, and glutamate 364. Residues glutamate 383 and glutamate 392 contribute to the active site.

It belongs to the class I-like SAM-binding methyltransferase superfamily. Protein arginine N-methyltransferase family.

It is found in the cytoplasm. The protein resides in the cytosol. The catalysed reaction is L-arginyl-[protein] + S-adenosyl-L-methionine = N(omega)-methyl-L-arginyl-[protein] + S-adenosyl-L-homocysteine + H(+). It catalyses the reaction L-arginyl-[protein] + 2 S-adenosyl-L-methionine = N(omega),N(omega)-dimethyl-L-arginyl-[protein] + 2 S-adenosyl-L-homocysteine + 2 H(+). Its function is as follows. Protein-arginine N-methyltransferase that catalyzes both the monomethylation and asymmetric dimethylation of the guanidino nitrogens of arginine residues in target proteins, and therefore falls into the group of type I methyltransferases. The chain is Probable protein arginine N-methyltransferase 3 (PRMT3) from Oryza sativa subsp. indica (Rice).